Here is a 1883-residue protein sequence, read N- to C-terminus: Chromodomain-helicase-DNA-binding protein 1 (1883 aa).

Residues 1-14 (MSQALNESANSIGS) show a composition bias toward polar residues. Residues 1–293 (MSQALNESAN…SEDEATDSED (293 aa)) are disordered. The span at 39 to 56 (SGSDSDSDSSSGNSSDGR) shows a compositional bias: low complexity. The span at 114-128 (QRNQSINNANTSSSL) shows a compositional bias: polar residues. Residues 159–172 (DSSANVSPTSSSSS) show a composition bias toward low complexity. Positions 213-226 (SDESDESEDSDDEV) are enriched in acidic residues. Polar residues predominate over residues 236 to 247 (ATTSRSKLAQQQ). A compositionally biased stretch (acidic residues) spans 284–293 (SEDEATDSED). 2 Chromo domains span residues 318-414 (ETIE…YWRR) and 439-501 (NNVD…TPSR). In terms of domain architecture, Helicase ATP-binding spans 540 to 710 (LHSWCKENSV…WALLHFIMPD (171 aa)). 553-560 (DEMGLGKT) lines the ATP pocket. The short motif at 661–664 (DEAH) is the DEAH box element. In terms of domain architecture, Helicase C-terminal spans 840 to 991 (LLDKLLCRLK…HLVIQRMDTT (152 aa)). Disordered regions lie at residues 1074-1185 (FEEE…MKEK), 1246-1265 (HKEE…AKQR), 1390-1491 (TKGG…MHFT), 1599-1829 (KAGG…PYSS), and 1848-1883 (PPPS…RTQT). Residues 1091–1103 (GEEDDSKDWDDII) show a composition bias toward acidic residues. Basic and acidic residues predominate over residues 1106 to 1121 (GFRKAIDDQERAKEME). Basic residues predominate over residues 1393 to 1402 (GQRRQRRPRA). Residues 1437-1451 (AESSNSQVDPSTASP) are compositionally biased toward polar residues. Residues 1466-1476 (KAKKSKARSKK) are compositionally biased toward basic residues. The interval 1505–1606 (LDPSIFNECK…KQKAGGDGEA (102 aa)) is CHD1 helical C-terminal domain (CHCT). The segment covering 1600-1612 (AGGDGEAKGKDKG) has biased composition (basic and acidic residues). Positions 1613-1622 (SSGSPAKSKP) are enriched in low complexity. Residues 1627-1638 (TEEKEKERDRSG) show a composition bias toward basic and acidic residues. Over residues 1724–1738 (YYGGSGPPMGSGSYE) the composition is skewed to gly residues. Residues 1742–1755 (NSRRQGPTSPSTPR) show a composition bias toward polar residues. Basic and acidic residues-rich tracts occupy residues 1773-1794 (EMER…RYDG), 1805-1817 (YHRE…EKRR), and 1868-1883 (YPAD…RTQT).

Belongs to the SNF2/RAD54 helicase family. In terms of assembly, monomer. Component of the SAGA complex. Interacts with SSRP1.

Its subcellular location is the nucleus. It is found in the chromosome. The enzyme catalyses ATP + H2O = ADP + phosphate + H(+). ATP-dependent chromatin-remodeling factor which functions as substrate recognition component of the transcription regulatory histone acetylation (HAT) complex SAGA. Regulates polymerase II transcription. Also required for efficient transcription by RNA polymerase I, and more specifically the polymerase I transcription termination step. Regulates negatively DNA replication. Not only involved in transcription-related chromatin remodeling, but also required to maintain a specific chromatin configuration across the genome. Involved in assembly of active chromatin. Required for maintaining open chromatin and pluripotency in embryonic stem cells and is important for wing development and fertility. Is essential for the incorporation of histone H3.3 and assembly of paternal chromatin. Required for replication-independent nucleosome assembly in the decondensing male pronucleus. In Drosophila melanogaster (Fruit fly), this protein is Chromodomain-helicase-DNA-binding protein 1 (Chd1).